Reading from the N-terminus, the 469-residue chain is Cysteine protease ATG4D (469 aa).

Residues 1-29 (MNSVSPLATQYGSPKGSQQMENRSTQSGG) are compositionally biased toward polar residues. Residues 1–41 (MNSVSPLATQYGSPKGSQQMENRSTQSGGHEQRKMGHQDAT) form a disordered region. The active-site Nucleophile is the cysteine 131. A disordered region spans residues 169-191 (IRSSSPPSMPLSSLATGHSAGDY). A compositionally biased stretch (low complexity) spans 171–182 (SSSPPSMPLSSL). Catalysis depends on residues aspartate 356 and histidine 358. The segment at 436–469 (QEYAEGPQSSSHPPVCRKKGPLVKRPSSDEFEFL) is disordered.

This sequence belongs to the peptidase C54 family.

It localises to the cytoplasm. It catalyses the reaction [protein]-C-terminal L-amino acid-glycyl-phosphatidylethanolamide + H2O = [protein]-C-terminal L-amino acid-glycine + a 1,2-diacyl-sn-glycero-3-phosphoethanolamine. The enzyme catalyses [protein]-C-terminal L-amino acid-glycyl-phosphatidylserine + H2O = [protein]-C-terminal L-amino acid-glycine + a 1,2-diacyl-sn-glycero-3-phospho-L-serine. In terms of biological role, cysteine protease that plays a key role in autophagy by mediating both proteolytic activation and delipidation of ATG8 family proteins. The protease activity is required for proteolytic activation of ATG8 family proteins to reveal a C-terminal glycine. Exposure of the glycine at the C-terminus is essential for ATG8 proteins conjugation to phosphatidylethanolamine (PE) and insertion to membranes, which is necessary for autophagy. In addition to the protease activity, also mediates delipidation of ATG8 family proteins. Catalyzes delipidation of PE-conjugated forms of ATG8 proteins during macroautophagy. Also involved in non-canonical autophagy, a parallel pathway involving conjugation of ATG8 proteins to single membranes at endolysosomal compartments, by catalyzing delipidation of ATG8 proteins conjugated to phosphatidylserine (PS). The sequence is that of Cysteine protease ATG4D from Xenopus laevis (African clawed frog).